The chain runs to 766 residues: Ribonuclease Z, mitochondrial (766 aa).

Residues Met-1–Ala-25 constitute a mitochondrion transit peptide.

It belongs to the RNase Z family. Homodimer. Requires Zn(2+) as cofactor.

The protein localises to the nucleus. It localises to the mitochondrion. It catalyses the reaction Endonucleolytic cleavage of RNA, removing extra 3' nucleotides from tRNA precursor, generating 3' termini of tRNAs. A 3'-hydroxy group is left at the tRNA terminus and a 5'-phosphoryl group is left at the trailer molecule.. Its function is as follows. Zinc phosphodiesterase, which displays some tRNA 3'-processing endonuclease activity of nuclear and mitochondrial pre-tRNA. Probably involved in tRNA maturation, by removing a 3'-trailer from precursor tRNA. May participate in tRNA processing in the developing embryo. The chain is Ribonuclease Z, mitochondrial from Drosophila melanogaster (Fruit fly).